A 206-amino-acid polypeptide reads, in one-letter code: Glycerol-3-phosphate acyltransferase (206 aa).

Transmembrane regions (helical) follow at residues 3 to 23 (LSLI…VIIG), 47 to 67 (VLGP…GTLA), 79 to 99 (HSLV…SIFL), 119 to 139 (PLFF…TSMV), and 152 to 172 (ILSF…VLIF).

The protein belongs to the PlsY family. In terms of assembly, probably interacts with PlsX.

The protein resides in the cell membrane. The enzyme catalyses an acyl phosphate + sn-glycerol 3-phosphate = a 1-acyl-sn-glycero-3-phosphate + phosphate. It participates in lipid metabolism; phospholipid metabolism. Functionally, catalyzes the transfer of an acyl group from acyl-phosphate (acyl-PO(4)) to glycerol-3-phosphate (G3P) to form lysophosphatidic acid (LPA). This enzyme utilizes acyl-phosphate as fatty acyl donor, but not acyl-CoA or acyl-ACP. In Latilactobacillus sakei subsp. sakei (strain 23K) (Lactobacillus sakei subsp. sakei), this protein is Glycerol-3-phosphate acyltransferase.